The following is a 330-amino-acid chain: 4-hydroxythreonine-4-phosphate dehydrogenase (330 aa).

Residues histidine 136 and threonine 137 each coordinate substrate. A divalent metal cation-binding residues include histidine 166, histidine 211, and histidine 266. Substrate is bound by residues lysine 274, asparagine 283, and arginine 292.

This sequence belongs to the PdxA family. In terms of assembly, homodimer. It depends on Zn(2+) as a cofactor. The cofactor is Mg(2+). Requires Co(2+) as cofactor.

Its subcellular location is the cytoplasm. The enzyme catalyses 4-(phosphooxy)-L-threonine + NAD(+) = 3-amino-2-oxopropyl phosphate + CO2 + NADH. It participates in cofactor biosynthesis; pyridoxine 5'-phosphate biosynthesis; pyridoxine 5'-phosphate from D-erythrose 4-phosphate: step 4/5. Its function is as follows. Catalyzes the NAD(P)-dependent oxidation of 4-(phosphooxy)-L-threonine (HTP) into 2-amino-3-oxo-4-(phosphooxy)butyric acid which spontaneously decarboxylates to form 3-amino-2-oxopropyl phosphate (AHAP). The sequence is that of 4-hydroxythreonine-4-phosphate dehydrogenase from Erwinia tasmaniensis (strain DSM 17950 / CFBP 7177 / CIP 109463 / NCPPB 4357 / Et1/99).